Consider the following 374-residue polypeptide: Proton-coupled zinc antiporter SLC30A8 (374 aa).

The Cytoplasmic segment spans residues 1–67; it reads MKGSEEAYLV…QREQTFAKKK (67 aa). Residues 18–48 are disordered; that stretch reads YSLTKDSEKNHPSKPPLQDEENPQSKYHCHN. The Zn(2+) site is built by His-45, Cys-46, and His-47. Positions 45–47 match the HCH Motif; seals regulatory zinc-binding pocket motif; sequence HCH. The chain crosses the membrane as a helical span at residues 68-88; that stretch reads LCIASLICFVFISAEIVGGYI. The Lumenal, vesicle segment spans residues 89–91; it reads AGS. A helical transmembrane segment spans residues 92–112; the sequence is LAVVTDAAHLLVDLSSFFISL. 3 residues coordinate Zn(2+): His-100, Asp-104, and His-131. Residues 113–134 lie on the Cytoplasmic side of the membrane; it reads CSLWLSSKSSTTRLTFGWHRAE. A helical transmembrane segment spans residues 135-155; it reads ILGALMSVITIWLVTGVLVYL. The Lumenal, vesicle portion of the chain corresponds to 156–169; it reads ACERLIRPDYTIDG. A helical membrane pass occupies residues 170 to 190; it reads TVMLITSACALGANLVLALIL. Residues 191-222 are Cytoplasmic-facing; it reads HQSGHGHSHAGGKHEHMASEYKPQTNASIRAA. A helical transmembrane segment spans residues 223–243; the sequence is FIHVIGDLFQSISVLISALII. His-225 and Asp-229 together coordinate Zn(2+). The Lumenal, vesicle segment spans residues 244 to 251; the sequence is YFKPEYKM. A helical membrane pass occupies residues 252 to 272; that stretch reads ADPICTFIFSIFVLITTVTVL. Over 273 to 374 the chain is Cytoplasmic; sequence RDLLTVLMEG…ECMFCYEPTQ (102 aa). Residues His-306, His-323, His-350, Glu-357, Cys-366, and Cys-369 each coordinate Zn(2+).

This sequence belongs to the cation diffusion facilitator (CDF) transporter (TC 2.A.4) family. SLC30A subfamily. In terms of assembly, homodimer.

The protein localises to the cytoplasmic vesicle. It localises to the secretory vesicle membrane. The protein resides in the cell membrane. The catalysed reaction is Zn(2+)(in) + 2 H(+)(out) = Zn(2+)(out) + 2 H(+)(in). Proton-coupled zinc ion antiporter mediating the entry of zinc into the lumen of pancreatic beta cell secretory granules, thereby regulating insulin secretion. This Xenopus tropicalis (Western clawed frog) protein is Proton-coupled zinc antiporter SLC30A8 (slc30a8).